The primary structure comprises 183 residues: Peptide deformylase (183 aa).

Fe cation is bound by residues cysteine 90 and histidine 132. Glutamate 133 is a catalytic residue. A Fe cation-binding site is contributed by histidine 136.

Belongs to the polypeptide deformylase family. Fe(2+) is required as a cofactor.

It catalyses the reaction N-terminal N-formyl-L-methionyl-[peptide] + H2O = N-terminal L-methionyl-[peptide] + formate. Functionally, removes the formyl group from the N-terminal Met of newly synthesized proteins. Requires at least a dipeptide for an efficient rate of reaction. N-terminal L-methionine is a prerequisite for activity but the enzyme has broad specificity at other positions. In Parafrankia sp. (strain EAN1pec), this protein is Peptide deformylase.